Consider the following 341-residue polypeptide: 4-hydroxy-2-oxovalerate aldolase (341 aa).

Positions 9 to 259 (VRITEVCLRD…KLDIDLYKMM (251 aa)) constitute a Pyruvate carboxyltransferase domain. 17-18 (RD) serves as a coordination point for substrate. Residue aspartate 18 participates in Mn(2+) binding. Histidine 21 functions as the Proton acceptor in the catalytic mechanism. Residues serine 171 and histidine 198 each contribute to the substrate site. Mn(2+) contacts are provided by histidine 198 and histidine 200. Substrate is bound at residue tyrosine 289.

It belongs to the 4-hydroxy-2-oxovalerate aldolase family.

The catalysed reaction is (S)-4-hydroxy-2-oxopentanoate = acetaldehyde + pyruvate. The polypeptide is 4-hydroxy-2-oxovalerate aldolase (Bacillus thuringiensis (strain Al Hakam)).